The primary structure comprises 1249 residues: Myosin-1 (1249 aa).

The interval 1-42 (MGHSRRPAGGEKKSRGFGRSKAVADVGDGRQTGGKPQVKKAT) is disordered. Residues 51 to 730 (IGVSDLTLLS…TLFALEAMRD (680 aa)) form the Myosin motor domain. Residue 144 to 151 (GESGAGKT) participates in ATP binding. A Phosphoserine modification is found at Ser372. An actin-binding region spans residues 419-501 (SIGILDIYGF…PGVFAALNDA (83 aa)). 2 consecutive IQ domains span residues 734 to 754 (HNMA…RTEC) and 755 to 780 (AIRI…QGHQ). In terms of domain architecture, TH1 spans 788–978 (RRRMSLLGSR…TIHTGPGEPA (191 aa)). Disordered stretches follow at residues 962 to 1079 (DDSY…PKKP) and 1126 to 1249 (WTPE…DDDW). The span at 1021-1035 (AAQPLPRATPQPAEP) shows a compositional bias: pro residues. A compositionally biased stretch (low complexity) spans 1036 to 1051 (QPAARAVPQPVAAVAA). 2 stretches are compositionally biased toward pro residues: residues 1064–1077 (APPP…PAPK) and 1139–1150 (TPKPAPPPPPAA). The region spanning 1076 to 1137 (PKKPTAKVLY…PEAYLEEQVA (62 aa)) is the SH3 domain. A compositionally biased stretch (low complexity) spans 1151 to 1169 (PRSTPAPATNGAAAAAKAK). Polar residues predominate over residues 1200–1221 (VSMNSHDSSGGSGRGTPNSMSN). Residues 1222 to 1231 (ASLAGGLAEA) are compositionally biased toward low complexity.

It belongs to the TRAFAC class myosin-kinesin ATPase superfamily. Myosin family. Post-translationally, phosphorylation of the TEDS site (Ser-372) is required for the polarization of the actin cytoskeleton. Phosphorylation probably activates the myosin-I ATPase activity.

It localises to the cytoplasm. Its subcellular location is the cytoskeleton. It is found in the actin patch. In terms of biological role, type-I myosin implicated in the organization of the actin cytoskeleton. Required for proper actin cytoskeleton polarization. At the cell cortex, assembles in patch-like structures together with proteins from the actin-polymerizing machinery and promotes actin assembly. Functions as actin nucleation-promoting factor (NPF) for the Arp2/3 complex. Plays an important role in polarized growth, spore germination, hyphal morphogenesis, and septal wall formation. This is Myosin-1 (myoA) from Aspergillus fumigatus (strain ATCC MYA-4609 / CBS 101355 / FGSC A1100 / Af293) (Neosartorya fumigata).